The following is a 158-amino-acid chain: Trafficking protein particle complex subunit 6B (158 aa).

It belongs to the TRAPP small subunits family. BET3 subfamily. In terms of assembly, homodimer. Part of a TRAPP complex. Heterodimer with TRAPPC3. The heterodimer TRAPPC6B-TRAPPC3 interacts with TRAPPC1 likely providing a core for TRAPP complex formation. As to expression, widely expressed. Expressed in lung, heart, liver, spleen, brain and kidney.

The protein resides in the golgi apparatus. It is found in the cis-Golgi network. The protein localises to the endoplasmic reticulum. Functionally, component of a transport protein particle (TRAPP) complex that may function in specific stages of inter-organelle traffic. Specifically involved in the early development of neural circuitry, likely by controlling the frequency and amplitude of intracellular calcium transients implicated in the regulation of neuron differentiation and survival. This is Trafficking protein particle complex subunit 6B from Mus musculus (Mouse).